Consider the following 244-residue polypeptide: Glutathione S-transferase theta-2 (244 aa).

In terms of domain architecture, GST N-terminal spans 2-82 (GLELFLDLVS…YLSCKYQTPD (81 aa)). Residues 40–41 (HK), 53–54 (KL), 66–67 (ES), and 104–107 (DCIR) each bind glutathione. A GST C-terminal domain is found at 88–224 (DLQARARVHE…SILEQAAKKT (137 aa)).

It belongs to the GST superfamily. Theta family. In terms of assembly, homodimer. As to expression, expressed at low levels in liver. In lung, expressed at low levels in ciliated bronchiolar cells, alveolar macrophages and alveolar type II cells.

It is found in the cytoplasm. The protein localises to the cytosol. The protein resides in the nucleus. The enzyme catalyses RX + glutathione = an S-substituted glutathione + a halide anion + H(+). Conjugation of reduced glutathione to a wide number of exogenous and endogenous hydrophobic electrophiles. Has a sulfatase activity. The protein is Glutathione S-transferase theta-2 (GSTT2) of Homo sapiens (Human).